We begin with the raw amino-acid sequence, 300 residues long: Alpha-ketoglutarate-dependent dioxygenase alkB homolog 4 (300 aa).

Ala-2 carries the post-translational modification N-acetylalanine. Residues Pro-148–Ser-272 form the Fe2OG dioxygenase domain. His-167, Asp-169, and His-252 together coordinate Fe cation. Arg-263 is a 2-oxoglutarate binding site.

Belongs to the alkB family. Interacts with ZFHX3, MLLT3, MLLT1, HSF4, EP300, TES, EIF3C, MTMR6 and PSMA6. Requires Fe(2+) as cofactor.

The protein localises to the cytoplasm. It is found in the nucleus. It localises to the nucleolus. Its subcellular location is the midbody. It catalyses the reaction an N(6)-methyl-2'-deoxyadenosine in DNA + 2-oxoglutarate + O2 = a 2'-deoxyadenosine in DNA + formaldehyde + succinate + CO2. The catalysed reaction is N(6)-methyl-L-lysyl-[protein] + 2-oxoglutarate + O2 = L-lysyl-[protein] + formaldehyde + succinate + CO2. Its function is as follows. Dioxygenase that mediates demethylation of actin monomethylated at 'Lys-84' (K84me1), thereby acting as a regulator of actomyosin-processes. Demethylation of actin K84me1 is required for maintaining actomyosin dynamics supporting normal cleavage furrow ingression during cytokinesis and cell migration. In addition to proteins, also demethylates DNA: specifically demethylates DNA methylated on the 6th position of adenine (N(6)-methyladenosine) DNA, thereby regulating Polycomb silencing. This is Alpha-ketoglutarate-dependent dioxygenase alkB homolog 4 from Mus musculus (Mouse).